Here is a 115-residue protein sequence, read N- to C-terminus: Holo-[acyl-carrier-protein] synthase (115 aa).

The Mg(2+) site is built by aspartate 8 and glutamate 50.

It belongs to the P-Pant transferase superfamily. AcpS family. Requires Mg(2+) as cofactor.

The protein localises to the cytoplasm. It catalyses the reaction apo-[ACP] + CoA = holo-[ACP] + adenosine 3',5'-bisphosphate + H(+). Transfers the 4'-phosphopantetheine moiety from coenzyme A to a Ser of acyl-carrier-protein. The polypeptide is Holo-[acyl-carrier-protein] synthase (Renibacterium salmoninarum (strain ATCC 33209 / DSM 20767 / JCM 11484 / NBRC 15589 / NCIMB 2235)).